A 119-amino-acid polypeptide reads, in one-letter code: Dolichyl-diphosphooligosaccharide--protein glycosyltransferase subunit DAD1 (119 aa).

Ser-2 carries the N-acetylserine modification. Topologically, residues 2–30 (SASVASVISRFLEEYLSSTPQRLKLLDAY) are cytoplasmic. A helical membrane pass occupies residues 31–51 (LLYILLTGALQFGYCLLVGTF). Residues 52 to 54 (PFN) are Lumenal-facing. The helical transmembrane segment at 55–75 (SFLSGFISCVGSFILAGNGSL) threads the bilayer. The Cytoplasmic segment spans residues 76–81 (RNRSNN). Residues 82–98 (VFTLVRCFSSLVTLFYS) form a helical membrane-spanning segment. Topologically, residues 99–119 (RSPPREVPRGACIALFCERGN) are lumenal.

This sequence belongs to the DAD/OST2 family. In terms of assembly, component of the oligosaccharyltransferase (OST) complex. OST exists in two different complex forms which contain common core subunits RPN1, RPN2, OST48, OST4, DAD1 and TMEM258, either STT3A or STT3B as catalytic subunits, and form-specific accessory subunits. STT3A complex assembly occurs through the formation of 3 subcomplexes. Subcomplex 1 contains RPN1 and TMEM258, subcomplex 2 contains the STT3A-specific subunits STT3A, DC2/OSTC, and KCP2 as well as the core subunit OST4, and subcomplex 3 contains RPN2, DAD1, and OST48. The STT3A complex can form stable complexes with the Sec61 complex or with both the Sec61 and TRAP complexes.

The protein resides in the endoplasmic reticulum membrane. It participates in protein modification; protein glycosylation. Its function is as follows. Subunit of the oligosaccharyl transferase (OST) complex that catalyzes the initial transfer of a defined glycan (Glc(3)Man(9)GlcNAc(2) in eukaryotes) from the lipid carrier dolichol-pyrophosphate to an asparagine residue within an Asn-X-Ser/Thr consensus motif in nascent polypeptide chains, the first step in protein N-glycosylation. N-glycosylation occurs cotranslationally and the complex associates with the Sec61 complex at the channel-forming translocon complex that mediates protein translocation across the endoplasmic reticulum (ER). All subunits are required for a maximal enzyme activity. The polypeptide is Dolichyl-diphosphooligosaccharide--protein glycosyltransferase subunit DAD1 (Canis lupus familiaris (Dog)).